Reading from the N-terminus, the 309-residue chain is tRNA hydroxylation protein P2 (309 aa).

Belongs to the peptidase U32 family.

Functionally, involved in prephenate-dependent formation of 5-hydroxyuridine (ho5U) modification at position 34 in tRNAs, the first step in 5-methoxyuridine (mo5U) biosynthesis. This Bacillus subtilis (strain 168) protein is tRNA hydroxylation protein P2.